Consider the following 95-residue polypeptide: Large ribosomal subunit protein bL25 (95 aa).

Belongs to the bacterial ribosomal protein bL25 family. As to quaternary structure, part of the 50S ribosomal subunit; part of the 5S rRNA/L5/L18/L25 subcomplex. Contacts the 5S rRNA. Binds to the 5S rRNA independently of L5 and L18.

Its function is as follows. This is one of the proteins that binds to the 5S RNA in the ribosome where it forms part of the central protuberance. This Shewanella halifaxensis (strain HAW-EB4) protein is Large ribosomal subunit protein bL25.